The chain runs to 59 residues: Potassium channel toxin alpha-KTx 16.4 (59 aa).

The N-terminal stretch at 1-22 is a signal peptide; it reads MKILSIVLIALIICSISICTEA. 3 disulfides stabilise this stretch: Cys-30/Cys-51, Cys-36/Cys-56, and Cys-40/Cys-58.

Belongs to the short scorpion toxin superfamily. Potassium channel inhibitor family. Alpha-KTx 16 subfamily. In terms of tissue distribution, expressed by the venom gland.

It is found in the secreted. In terms of biological role, weak inhibitor of voltage-gated potassium channel hKv1.3/KCNA3. In Mesobuthus eupeus (Lesser Asian scorpion), this protein is Potassium channel toxin alpha-KTx 16.4.